The following is a 335-amino-acid chain: Zinc-type alcohol dehydrogenase-like protein SAV2186 (335 aa).

This sequence belongs to the zinc-containing alcohol dehydrogenase family. Quinone oxidoreductase subfamily.

The protein is Zinc-type alcohol dehydrogenase-like protein SAV2186 of Staphylococcus aureus (strain Mu50 / ATCC 700699).